The sequence spans 279 residues: Movement protein (279 aa).

Belongs to the cucumovirus movement protein family.

It localises to the host cell junction. The protein resides in the host plasmodesma. Functionally, transports viral genome to neighboring plant cells directly through plasmosdesmata, without any budding. The movement protein allows efficient cell to cell propagation, by bypassing the host cell wall barrier. Acts by forming a tubular structure at the host plasmodesmata, enlarging it enough to allow free passage of virion capsids. In Cucumber mosaic virus (strain C7-2) (CMV), this protein is Movement protein.